We begin with the raw amino-acid sequence, 1081 residues long: WD repeat-containing protein 64 (1081 aa).

14 WD repeats span residues 102–152 (DPIA…ATQK), 153–198 (GLIT…GSSQ), 199–265 (ENYF…VLDS), 266–314 (KNFK…LEDN), 315–356 (LPVR…NIST), 357–400 (KPVG…TLSL), 401–444 (LQVF…TRMI), 445–488 (QDTK…ETGL), 489–532 (QVYQ…FGSG), 533–631 (QEMK…LIVE), 632–740 (RNFS…PQSS), 741–803 (KGSK…EGRL), 804–857 (LKDM…EKKF), and 858–895 (KQLL…RLWH). A compositionally biased stretch (low complexity) spans 726-745 (CSSSQCESSKGPQSSKGSKQ). A disordered region spans residues 726–757 (CSSSQCESSKGPQSSKGSKQSIHDSEVKGEQT). A compositionally biased stretch (basic and acidic residues) spans 746 to 756 (SIHDSEVKGEQ). Residues 1036-1060 (DSSDGITGKKKGGHVQREKAPRRRS) are disordered. Over residues 1043–1060 (GKKKGGHVQREKAPRRRS) the composition is skewed to basic residues.

This chain is WD repeat-containing protein 64 (WDR64), found in Homo sapiens (Human).